A 337-amino-acid chain; its full sequence is 1-aminocyclopropane-1-carboxylate deaminase (337 aa).

Residue K50 is modified to N6-(pyridoxal phosphate)lysine. S77 acts as the Nucleophile in catalysis.

This sequence belongs to the ACC deaminase/D-cysteine desulfhydrase family. Homotrimer. Pyridoxal 5'-phosphate is required as a cofactor.

It catalyses the reaction 1-aminocyclopropane-1-carboxylate + H2O = 2-oxobutanoate + NH4(+). Catalyzes a cyclopropane ring-opening reaction, the irreversible conversion of 1-aminocyclopropane-1-carboxylate (ACC) to ammonia and alpha-ketobutyrate. Allows growth on ACC as a nitrogen source. This is 1-aminocyclopropane-1-carboxylate deaminase from Methylobacterium nodulans (strain LMG 21967 / CNCM I-2342 / ORS 2060).